Consider the following 48-residue polypeptide: MKIQIKGMKQLSNKEMQKIVGGKSSAYSLQMGATAIKQVKKLFKKWGW.

A propeptide spanning residues 1–25 (MKIQIKGMKQLSNKEMQKIVGGKSS) is cleaved from the precursor.

As to quaternary structure, active plantaricin A is composed of an alpha chain and a beta chain.

This heat stable bacteriocin inhibits the growth of closely related Lactobacillus species. It may act as a pore-forming protein, creating a channel in the cell membrane through a 'barrel stave' mechanism. The protein is Bacteriocin plantaricin-A (plnA) of Lactiplantibacillus plantarum (strain ATCC BAA-793 / NCIMB 8826 / WCFS1) (Lactobacillus plantarum).